The primary structure comprises 162 residues: MRAPIPEPKPGDLIEIFRPFYRHWAIYVGDGYVVHLAPPSEVAGAGAASVMSALTDKAIVKKELLYDVAGSDKYQVNNKHDDKYSPLPCSKIIQRAEELVGQEVLYKLTSENCEHFVNELRYGVARSDQVRDVIIAASVAGMGLAAMSLIGVMFSRNKRQKQ.

The Cytoplasmic segment spans residues 1–133 (MRAPIPEPKP…VARSDQVRDV (133 aa)). Positions 13 to 129 (LIEIFRPFYR…LRYGVARSDQ (117 aa)) constitute an LRAT domain. Catalysis depends on residues histidine 23 and histidine 35. Cysteine 113 functions as the Acyl-thioester intermediate in the catalytic mechanism. Residues 134–154 (IIAASVAGMGLAAMSLIGVMF) traverse the membrane as a helical segment. At 155–162 (SRNKRQKQ) the chain is on the lumenal side.

This sequence belongs to the H-rev107 family. Interacts with PPP2R1A; this interaction might decrease PP2A activity. Widely expressed. Low expression, if any, in hematopoietic cells and thymus. In testis, confined to round spermatids. Expressed in normal ovarian epithelial cells. Down-regulated in some ovarian carcinomas and testicular germ cell tumors. Highly expressed in white adipose tissue.

The protein resides in the cell membrane. It is found in the cytoplasm. It localises to the cytosol. Its subcellular location is the perinuclear region. The protein localises to the peroxisome membrane. The protein resides in the mitochondrion membrane. It is found in the nucleus envelope. It localises to the lysosome membrane. Its subcellular location is the endoplasmic reticulum membrane. The catalysed reaction is a 1,2-diacyl-sn-glycero-3-phosphocholine + H2O = a 1-acyl-sn-glycero-3-phosphocholine + a fatty acid + H(+). The enzyme catalyses a 1,2-diacyl-sn-glycero-3-phosphocholine + H2O = a 2-acyl-sn-glycero-3-phosphocholine + a fatty acid + H(+). It carries out the reaction 1,2-dihexadecanoyl-sn-glycero-3-phosphocholine + H2O = 1-hexadecanoyl-sn-glycero-3-phosphocholine + hexadecanoate + H(+). It catalyses the reaction 1,2-dihexadecanoyl-sn-glycero-3-phosphocholine + H2O = 2-hexadecanoyl-sn-glycero-3-phosphocholine + hexadecanoate + H(+). The catalysed reaction is 1-hexadecanoyl-2-(9Z-octadecenoyl)-sn-glycero-3-phosphocholine + H2O = 2-(9Z-octadecenoyl)-sn-glycero-3-phosphocholine + hexadecanoate + H(+). The enzyme catalyses 1-hexadecanoyl-2-(9Z-octadecenoyl)-sn-glycero-3-phosphocholine + H2O = 1-hexadecanoyl-sn-glycero-3-phosphocholine + (9Z)-octadecenoate + H(+). It carries out the reaction 1-hexadecanoyl-2-(5Z,8Z,11Z,14Z-eicosatetraenoyl)-sn-glycero-3-phosphocholine + H2O = 1-hexadecanoyl-sn-glycero-3-phosphocholine + (5Z,8Z,11Z,14Z)-eicosatetraenoate + H(+). It catalyses the reaction 1-hexadecanoyl-2-(5Z,8Z,11Z,14Z-eicosatetraenoyl)-sn-glycero-3-phosphocholine + H2O = 2-(5Z,8Z,11Z,14Z)-eicosatetraenoyl-sn-glycero-3-phosphocholine + hexadecanoate + H(+). The catalysed reaction is 1-hexadecanoyl-2-(9Z,12Z-octadecadienoyl)-sn-glycero-3-phosphoethanolamine + H2O = 1-hexadecanoyl-sn-glycero-3-phosphoethanolamine + (9Z,12Z)-octadecadienoate + H(+). The enzyme catalyses 1-hexadecanoyl-2-(9Z,12Z-octadecadienoyl)-sn-glycero-3-phosphoethanolamine + H2O = 2-(9Z,12Z)-octadecadienoyl-sn-glycero-3-phosphoethanolamine + hexadecanoate + H(+). It carries out the reaction 1-hexadecanoyl-2-(5Z,8Z,11Z,14Z-eicosatetraenoyl)-sn-glycero-3-phosphoethanolamine + H2O = 1-hexadecanoyl-sn-glycero-3-phosphoethanolamine + (5Z,8Z,11Z,14Z)-eicosatetraenoate + H(+). It catalyses the reaction 1-hexadecanoyl-2-(5Z,8Z,11Z,14Z-eicosatetraenoyl)-sn-glycero-3-phosphoethanolamine + H2O = 2-(5Z,8Z,11Z,14Z)-eicosatetraenoyl-sn-glycero-3-phosphoethanolamine + hexadecanoate + H(+). The catalysed reaction is 1-hexanoyl-2-acyl-sn-glycero-3-phosphocholine + H2O = hexanoate + a 2-acyl-sn-glycero-3-phosphocholine + H(+). The enzyme catalyses 1-hexanoyl-2-acyl-sn-glycero-3-phosphocholine + H2O = 1-hexanoyl-sn-glycero-3-phosphocholine + a fatty acid + H(+). It carries out the reaction 1,2-diheptadecanoyl-sn-glycero-3-phosphoethanolamine + 1-(9Z-octadecenoyl)-2-hexadecanoyl-sn-glycero-3-phosphocholine = 1,2-diheptadecanoyl-sn-glycero-3-phospho-N-hexadecanoyl-ethanolamine + 1-(9Z-octadecenoyl)-sn-glycero-3-phosphocholine + H(+). It catalyses the reaction 1,2-diheptadecanoyl-sn-glycero-3-phosphoethanolamine + 1-(9Z-octadecenoyl)-2-hexadecanoyl-sn-glycero-3-phosphocholine = 1,2-diheptadecanoyl-sn-glycero-3-phospho-N-(9Z-octadecenoyl)-ethanolamine + 2-hexadecanoyl-sn-glycero-3-phosphocholine + H(+). The catalysed reaction is 1,2-dihexanoyl-sn-glycero-3-phosphoethanolamine + 2-heptanoyl-sn-glycero-3-phosphocholine = hexanoyl-sn-glycero-3-phosphoethanolamine + 1-hexanoyl-2-heptanoyl-sn-glycero-3-phosphocholine. The enzyme catalyses 1-hexadecanoyl-2-octadecanoyl-sn-glycero-3-phosphocholine + H2O = octadecanoate + 1-hexadecanoyl-sn-glycero-3-phosphocholine + H(+). It carries out the reaction 1-hexadecanoyl-2-octadecanoyl-sn-glycero-3-phosphocholine + H2O = 2-octadecanoyl-sn-glycero-3-phosphocholine + hexadecanoate + H(+). It catalyses the reaction 1-octadecanoyl-2-hexadecanoyl-sn-glycero-3-phosphocholine + H2O = 1-octadecanoyl-sn-glycero-3-phosphocholine + hexadecanoate + H(+). The catalysed reaction is 1-octadecanoyl-2-hexadecanoyl-sn-glycero-3-phosphocholine + H2O = 2-hexadecanoyl-sn-glycero-3-phosphocholine + octadecanoate + H(+). The enzyme catalyses 1-hexadecanoyl-2-(9Z,12Z-octadecadienoyl)-sn-glycero-3-phosphocholine + H2O = (9Z,12Z)-octadecadienoate + 1-hexadecanoyl-sn-glycero-3-phosphocholine + H(+). It carries out the reaction 1-hexadecanoyl-2-(9Z,12Z-octadecadienoyl)-sn-glycero-3-phosphocholine + H2O = 2-(9Z,12Z-octadecadienoyl)-sn-glycero-3-phosphocholine + hexadecanoate + H(+). It catalyses the reaction 1,2-di-(9Z-octadecenoyl)-sn-glycero-3-phosphocholine + H2O = 2-(9Z-octadecenoyl)-sn-glycero-3-phosphocholine + (9Z)-octadecenoate + H(+). The catalysed reaction is 1,2-dihexadecanoyl-sn-glycero-3-phosphocholine + H2O = hexadecanoyl-sn-glycero-3-phosphocholine + hexadecanoate + H(+). The enzyme catalyses 1,2-di-(9Z-octadecenoyl)-sn-glycero-3-phosphocholine + H2O = 1-(9Z-octadecenoyl)-sn-glycero-3-phosphocholine + (9Z)-octadecenoate + H(+). It carries out the reaction 1,2-di-(9Z-octadecenoyl)-sn-glycero-3-phosphoethanolamine + 1,2-dihexadecanoyl-sn-glycero-3-phosphocholine = hexadecanoyl-sn-glycero-3-phosphocholine + N-hexadecanoyl-1,2-di-(9Z-octadecenoyl)-sn-glycero-3-phosphoethanolamine + H(+). It catalyses the reaction 1,2-di-(9Z,12Z-octadecadienoyl)-sn-glycero-3-phosphocholine + H2O = 1-(9Z,12Z)-octadecadienoyl-sn-glycero-3-phosphocholine + (9Z,12Z)-octadecadienoate + H(+). Exhibits both phospholipase A1/2 and acyltransferase activities. Shows phospholipase A1 (PLA1) and A2 (PLA2) activity, catalyzing the calcium-independent release of fatty acids from the sn-1 or sn-2 position of glycerophospholipids. For most substrates, PLA1 activity is much higher than PLA2 activity. Shows O-acyltransferase activity,catalyzing the transfer of a fatty acyl group from glycerophospholipid to the hydroxyl group of lysophospholipid. Shows N-acyltransferase activity, catalyzing the calcium-independent transfer of a fatty acyl group at the sn-1 position of phosphatidylcholine (PC) and other glycerophospholipids to the primary amine of phosphatidylethanolamine (PE), forming N-acylphosphatidylethanolamine (NAPE), which serves as precursor for N-acylethanolamines (NAEs). Exhibits high N-acyltransferase activity and low phospholipase A1/2 activity. Required for complete organelle rupture and degradation that occur during eye lens terminal differentiation, when fiber cells that compose the lens degrade all membrane-bound organelles in order to provide lens with transparency to allow the passage of light. Organelle membrane degradation is probably catalyzed by the phospholipase activity. In terms of biological role, (Microbial infection) Acts as a host factor for picornaviruses: required during early infection to promote viral genome release into the cytoplasm. May act as a cellular sensor of membrane damage at sites of virus entry, which relocalizes to sites of membrane rupture upon virus unfection. Facilitates safe passage of the RNA away from LGALS8, enabling viral genome translation by host ribosome. May also be involved in initiating pore formation, increasing pore size or in maintaining pores for genome delivery. The lipid-modifying enzyme activity is required for this process. The polypeptide is Phospholipase A and acyltransferase 3 (Homo sapiens (Human)).